Reading from the N-terminus, the 159-residue chain is Kojic acid related protein 6 (159 aa).

Its function is as follows. Negatively regulates mycelium growth and conidial formation and is required for stress tolerance. Plays a role in kojic acid synthesis in coordination with kojA, kojR and kojT where it acts upstream of kojA. This is Kojic acid related protein 6 from Aspergillus oryzae (strain ATCC 42149 / RIB 40) (Yellow koji mold).